The primary structure comprises 146 residues: Ribonuclease H (146 aa).

The 141-residue stretch at 1 to 141 (MKHVDIFTDG…ADELARKGME (141 aa)) folds into the RNase H type-1 domain. 4 residues coordinate Mg(2+): Asp9, Glu47, Asp69, and Asp133. A disordered region spans residues 123 to 146 (HAGHPENERADELARKGMEPFKRR). Residues 125–146 (GHPENERADELARKGMEPFKRR) are compositionally biased toward basic and acidic residues.

This sequence belongs to the RNase H family. As to quaternary structure, monomer. Mg(2+) serves as cofactor.

It localises to the cytoplasm. The enzyme catalyses Endonucleolytic cleavage to 5'-phosphomonoester.. Functionally, endonuclease that specifically degrades the RNA of RNA-DNA hybrids. This chain is Ribonuclease H, found in Agrobacterium fabrum (strain C58 / ATCC 33970) (Agrobacterium tumefaciens (strain C58)).